The following is a 151-amino-acid chain: UPF0735 ACT domain-containing protein SAUSA300_1599 (151 aa).

The ACT domain maps to T74 to M149.

Belongs to the UPF0735 family.

This Staphylococcus aureus (strain USA300) protein is UPF0735 ACT domain-containing protein SAUSA300_1599.